Reading from the N-terminus, the 189-residue chain is Thymidylate kinase (189 aa).

7 to 14 (GIDTAGKS) is a binding site for ATP.

It belongs to the thymidylate kinase family.

It catalyses the reaction dTMP + ATP = dTDP + ADP. In terms of biological role, phosphorylation of dTMP to form dTDP in both de novo and salvage pathways of dTTP synthesis. This chain is Thymidylate kinase, found in Aliarcobacter butzleri (strain RM4018) (Arcobacter butzleri).